A 254-amino-acid chain; its full sequence is L-arabinose 1-dehydrogenase (NAD(P)(+)) (254 aa).

Catalysis depends on Tyr-142, which acts as the Proton acceptor. 2 residues coordinate NAD(+): Tyr-142 and Lys-146.

The protein belongs to the NAD(P)-dependent epimerase/dehydratase family. In terms of assembly, homotetramer.

The enzyme catalyses alpha-L-arabinopyanose + NAD(+) = L-arabinono-1,4-lactone + NADH + H(+). It carries out the reaction alpha-L-arabinopyanose + NADP(+) = L-arabinono-1,4-lactone + NADPH + H(+). It participates in carbohydrate degradation; L-arabinose degradation via L-arabinono-1,4-lactone pathway. Its function is as follows. L-AraDH initiates the degradation of L-arabinose. Catalyzes the NAD(P)(+)-dependent conversion of L-arabinose to L-arabino-gamma-lactone. It is highly specific for L-arabinose as substrate and can use both NADP(+) and NAD(+) as electron acceptor, with a slight preference for NADP(+). This Haloferax volcanii (strain ATCC 29605 / DSM 3757 / JCM 8879 / NBRC 14742 / NCIMB 2012 / VKM B-1768 / DS2) (Halobacterium volcanii) protein is L-arabinose 1-dehydrogenase (NAD(P)(+)).